A 143-amino-acid polypeptide reads, in one-letter code: Agaricus bisporus lectin (143 aa).

Beta-D-Gal-(1-&gt;3)-alpha-D-GalNAc-binding residues include A29, S48, G49, and N73. 3 residues coordinate N-acetyl-beta-D-glucosamine: T82, R103, and Y114.

The protein belongs to the fungal fruit body lectin family. As to quaternary structure, homotetramer.

Lectin that recognizes O-linked galactose-beta-1,3-N-acetylgalactosamine, a disaccharide (Thomsen-Friedenreich antigen or T-disaccharide), present on cell surface glycoproteins. Can also bind galactose-beta-1,3-N-acetylglucosamine. Does not bind monosaccharides. Can be internalized by clathrin-coated vesicles after binding to surface glycoproteins. After internalization it inhibits nuclear import of nuclear localization signal dependent proteins. Inhibits proliferation of malignant cells without cytotoxicity for normal cells. This Agaricus bisporus (White button mushroom) protein is Agaricus bisporus lectin.